The sequence spans 1480 residues: Cystic fibrosis transmembrane conductance regulator (1480 aa).

Residues 1–77 lie on the Cytoplasmic side of the membrane; sequence MQRSPLEKAS…KLINALRRCF (77 aa). A helical transmembrane segment spans residues 78–98; that stretch reads FWRFMFYGIFLYLGEVTKAVQ. The 285-residue stretch at 81–365 folds into the ABC transmembrane type-1 1 domain; sequence FMFYGIFLYL…WAVQTWYDSL (285 aa). The Extracellular portion of the chain corresponds to 99–122; it reads PLLLGRIIASYDPDNKEERSIAIY. Residues 123 to 146 form a helical membrane-spanning segment; that stretch reads LGIGLCLLFIVRTLLLHPAIFGLH. Over 147–195 the chain is Cytoplasmic; the sequence is HIGMQMRIAMFSLIYKKTLKLSSRVLDKISIGQLVSLLSNNLNKFDEGL. A helical membrane pass occupies residues 196 to 216; sequence ALAHFVWIAPLQVALLMGLIW. Over 217–222 the chain is Extracellular; the sequence is ELLQAS. Residues 223–243 form a helical membrane-spanning segment; the sequence is AFCGLGFLIVLALFQAGLGRM. The Cytoplasmic segment spans residues 244–298; it reads MMKYRDQRAGKISERLVITSEMIENIQSVKAYCWEEAMEKMIENLRQTELKLTRK. The helical transmembrane segment at 299-319 threads the bilayer; it reads AAYVRYFNSSAFFFSGFFVVF. Over 320 to 339 the chain is Extracellular; sequence LSVLPYALIKGIILRKIFTT. Residues 340–358 form a helical membrane-spanning segment; that stretch reads ISFCIVLRMAVTRQFPWAV. Over 359–858 the chain is Cytoplasmic; that stretch reads QTWYDSLGAI…YLRYITVHKS (500 aa). ATP is bound by residues tryptophan 401, serine 434, 458-465, and glutamine 493; that span reads GSTGAGKT. In terms of domain architecture, ABC transporter 1 spans 423–646; sequence NGDDSLFFSN…RPDFSSKLMG (224 aa). Cysteine 524 carries the S-palmitoyl cysteine lipid modification. 2 positions are modified to phosphoserine: serine 549 and serine 660. Residues 654–831 form a disordered R region region; that stretch reads SAERRNSILT…EEINEEDLKE (178 aa). Phosphoserine; by PKA is present on serine 670. Serine 686 is subject to Phosphoserine. Lysine 688 is covalently cross-linked (Glycyl lysine isopeptide (Lys-Gly) (interchain with G-Cter in ubiquitin)). A phosphoserine mark is found at serine 700 and serine 712. Threonine 717 carries the post-translational modification Phosphothreonine. Phosphoserine occurs at positions 737, 753, 768, 790, 795, and 813. The chain crosses the membrane as a helical span at residues 859-879; it reads LIFVLIWCLVIFLAEVAASLV. In terms of domain architecture, ABC transmembrane type-1 2 spans 859 to 1155; that stretch reads LIFVLIWCLV…AVNSSIDVDS (297 aa). Residues 880-918 lie on the Extracellular side of the membrane; the sequence is VLWLLGNTPLQDKGNSTHSRNNSYAVIITSTSSYYVFYI. N-linked (GlcNAc...) asparagine glycosylation is found at asparagine 894 and asparagine 900. A discontinuously helical membrane pass occupies residues 919–939; it reads YVGVADTLLAMGFFRGLPLVH. The Cytoplasmic portion of the chain corresponds to 940–990; that stretch reads TLITVSKILHHKMLHSVLQAPMSTLNTLKAGGILNRFSKDIAILDDLLPLT. Residues 991–1011 traverse the membrane as a helical segment; the sequence is IFDFIQLLLIVIGAIAVVAVL. Residues 1012-1013 lie on the Extracellular side of the membrane; the sequence is QP. A helical membrane pass occupies residues 1014-1034; sequence YIFVATVPVIVAFIMLRAYFL. Residues 1035–1095 are Cytoplasmic-facing; the sequence is QTSQQLKQLE…TANWFLYLST (61 aa). The helical transmembrane segment at 1096–1116 threads the bilayer; it reads LRWFQMRIEMIFVIFFIAVTF. The Extracellular portion of the chain corresponds to 1117–1130; the sequence is ISILTTGEGEGRVG. A helical membrane pass occupies residues 1131-1151; sequence IILTLAMNIMSTLQWAVNSSI. At 1152-1480 the chain is on the cytoplasmic side; the sequence is DVDSLMRSVS…TEEEVQDTRL (329 aa). An ABC transporter 2 domain is found at 1210–1443; that stretch reads MTVKDLTAKY…RSLFRQAISP (234 aa). ATP-binding positions include tyrosine 1219 and 1244–1251; that span reads GRTGSGKS. The interval 1386–1480 is interaction with GORASP2; that stretch reads RTLKQAFADC…TEEEVQDTRL (95 aa). Cysteine 1395 carries S-palmitoyl cysteine lipidation. Phosphoserine occurs at positions 1444 and 1456. The interval 1452 to 1480 is disordered; the sequence is HRNSSKCKSKPQIAALKEETEEEVQDTRL. Residues 1470–1480 show a composition bias toward acidic residues; sequence ETEEEVQDTRL. Residues 1478 to 1480 carry the PDZ-binding motif; that stretch reads TRL.

This sequence belongs to the ABC transporter superfamily. ABCC family. CFTR transporter (TC 3.A.1.202) subfamily. As to quaternary structure, monomer; does not require oligomerization for channel activity. May form oligomers in the membrane. Interacts with SLC26A3, SLC26A6 and NHERF1. Interacts with SHANK2. Interacts with MYO6. Interacts (via C-terminus) with GOPC (via PDZ domain); this promotes CFTR internalization and thereby decreases channel activity. Interacts with SLC4A7 through NHERF1. Found in a complex with MYO5B and RAB11A. Interacts with ANO1. Interacts with SLC26A8. Interacts with AHCYL1; the interaction increases CFTR activity. Interacts with CSE1L. The core-glycosylated form interacts with GORASP2 (via PDZ GRASP-type 1 domain) in respone to ER stress. Interacts with MARCHF2; the interaction leads to CFTR ubiqtuitination and degradation. Interacts with ADGRG2. N-glycosylated. Post-translationally, phosphorylated; cAMP treatment promotes phosphorylation and activates the channel. Dephosphorylation decreases the ATPase activity (in vitro). Phosphorylation at PKA sites activates the channel. Phosphorylation at PKC sites enhances the response to phosphorylation by PKA. Phosphorylated by AMPK; this inhibits channel activity. In terms of processing, ubiquitinated, leading to its degradation in the lysosome. Deubiquitination by USP10 in early endosomes enhances its endocytic recycling to the cell membrane. Ubiquitinated by RNF185 during ER stress. Ubiquitinated by MARCHF2.

It localises to the apical cell membrane. The protein resides in the early endosome membrane. It is found in the cell membrane. The protein localises to the recycling endosome membrane. Its subcellular location is the endoplasmic reticulum membrane. It localises to the nucleus. The enzyme catalyses ATP + H2O + closed Cl(-) channel = ADP + phosphate + open Cl(-) channel.. It catalyses the reaction chloride(in) = chloride(out). It carries out the reaction hydrogencarbonate(in) = hydrogencarbonate(out). The catalysed reaction is ATP + H2O = ADP + phosphate + H(+). Functionally, epithelial ion channel that plays an important role in the regulation of epithelial ion and water transport and fluid homeostasis. Mediates the transport of chloride ions across the cell membrane. Possesses an intrinsic ATPase activity and utilizes ATP to gate its channel; the passive flow of anions through the channel is gated by cycles of ATP binding and hydrolysis by the ATP-binding domains. The ion channel is also permeable to HCO(3)(-); selectivity depends on the extracellular chloride concentration. Exerts its function also by modulating the activity of other ion channels and transporters. Contributes to the regulation of the pH and the ion content of the epithelial fluid layer. Modulates the activity of the epithelial sodium channel (ENaC) complex, in part by regulating the cell surface expression of the ENaC complex. May regulate bicarbonate secretion and salvage in epithelial cells by regulating the transporter SLC4A7. Can inhibit the chloride channel activity of ANO1. Plays a role in the chloride and bicarbonate homeostasis during sperm epididymal maturation and capacitation. This Pan troglodytes (Chimpanzee) protein is Cystic fibrosis transmembrane conductance regulator.